A 266-amino-acid chain; its full sequence is Acetyl esterase (266 aa).

This Caldicellulosiruptor saccharolyticus (Caldocellum saccharolyticum) protein is Acetyl esterase (xynC).